The following is a 145-amino-acid chain: Large ribosomal subunit protein bL17 (145 aa).

Belongs to the bacterial ribosomal protein bL17 family. As to quaternary structure, part of the 50S ribosomal subunit. Contacts protein L32.

The sequence is that of Large ribosomal subunit protein bL17 from Francisella tularensis subsp. tularensis (strain FSC 198).